The sequence spans 337 residues: Putative 2-aminoethylphosphonate-binding periplasmic protein (337 aa).

The first 21 residues, 1–21 (MKLSRLALLSVFALASAPSWA), serve as a signal peptide directing secretion.

Belongs to the bacterial solute-binding protein 1 family.

It localises to the periplasm. Its function is as follows. Probably part of the PhnSTUV complex (TC 3.A.1.11.5) involved in 2-aminoethylphosphonate import. This chain is Putative 2-aminoethylphosphonate-binding periplasmic protein (phnS), found in Salmonella typhi.